We begin with the raw amino-acid sequence, 154 residues long: Aspartate carbamoyltransferase regulatory chain (154 aa).

4 residues coordinate Zn(2+): Cys109, Cys114, Cys138, and Cys141.

This sequence belongs to the PyrI family. As to quaternary structure, contains catalytic and regulatory chains. Requires Zn(2+) as cofactor.

Involved in allosteric regulation of aspartate carbamoyltransferase. This is Aspartate carbamoyltransferase regulatory chain from Photorhabdus laumondii subsp. laumondii (strain DSM 15139 / CIP 105565 / TT01) (Photorhabdus luminescens subsp. laumondii).